The chain runs to 512 residues: Maturase K (512 aa).

It belongs to the intron maturase 2 family. MatK subfamily.

The protein localises to the plastid. The protein resides in the chloroplast. Usually encoded in the trnK tRNA gene intron. Probably assists in splicing its own and other chloroplast group II introns. The polypeptide is Maturase K (Oenothera parviflora (Small-flowered evening primrose)).